A 147-amino-acid polypeptide reads, in one-letter code: Acireductone dioxygenase (147 aa).

Fe(2+) contacts are provided by His-74, His-76, Glu-80, and His-119. Residues His-74, His-76, Glu-80, and His-119 each contribute to the Ni(2+) site.

This sequence belongs to the acireductone dioxygenase (ARD) family. Requires Fe(2+) as cofactor. Ni(2+) is required as a cofactor.

It is found in the cytoplasm. The protein resides in the nucleus. It carries out the reaction 1,2-dihydroxy-5-(methylsulfanyl)pent-1-en-3-one + O2 = 4-methylsulfanyl-2-oxobutanoate + formate + 2 H(+). The enzyme catalyses 1,2-dihydroxy-5-(methylsulfanyl)pent-1-en-3-one + O2 = 3-(methylsulfanyl)propanoate + CO + formate + 2 H(+). It participates in amino-acid biosynthesis; L-methionine biosynthesis via salvage pathway; L-methionine from S-methyl-5-thio-alpha-D-ribose 1-phosphate: step 5/6. Functionally, catalyzes 2 different reactions between oxygen and the acireductone 1,2-dihydroxy-3-keto-5-methylthiopentene (DHK-MTPene) depending upon the metal bound in the active site. Fe-containing acireductone dioxygenase (Fe-ARD) produces formate and 2-keto-4-methylthiobutyrate (KMTB), the alpha-ketoacid precursor of methionine in the methionine recycle pathway. Ni-containing acireductone dioxygenase (Ni-ARD) produces methylthiopropionate, carbon monoxide and formate, and does not lie on the methionine recycle pathway. The chain is Acireductone dioxygenase (adi1) from Dictyostelium discoideum (Social amoeba).